Reading from the N-terminus, the 889-residue chain is Putative receptor-like protein kinase At3g46340 (889 aa).

The N-terminal stretch at 1–25 (MEFPHSVLLVVLIIATFAISNLVQA) is a signal peptide. At 26–514 (EEDQEGFISL…VITKKKFPVM (489 aa)) the chain is on the extracellular side. N-linked (GlcNAc...) asparagine glycosylation is found at N185, N239, N259, N292, N316, N342, N366, N419, N435, N448, N467, and N474. LRR repeat units follow at residues 414-437 (RITSLNLSSTGLTGNIAAGIQNLT), 438-460 (HLDKLDLSNNNLTGGVPEFLASM), and 462-483 (SLSFINLSKNNLNGSIPQALLK). A helical membrane pass occupies residues 515-535 (IVALVSSAVVVILVVLVLIFV). Topologically, residues 536–889 (FKKKKPSNLE…FDTKAVPSAR (354 aa)) are cytoplasmic. Residues 544–566 (LEDLPPSSNTPRENITSTSISDT) form a disordered region. One can recognise a Protein kinase domain in the interval 585-874 (KNLQRPLGEG…TQGMDSHSSF (290 aa)). Residues 591–599 (LGEGGFGVV) and K614 contribute to the ATP site. Y659 bears the Phosphotyrosine mark. D711 serves as the catalytic Proton acceptor. S745 is subject to Phosphoserine. Phosphothreonine is present on residues T746 and T751. Y759 is modified (phosphotyrosine). The interval 863-889 (NKTQGMDSHSSFEQSMSFDTKAVPSAR) is disordered. Over residues 864–880 (KTQGMDSHSSFEQSMSF) the composition is skewed to polar residues.

Belongs to the protein kinase superfamily. Ser/Thr protein kinase family.

Its subcellular location is the cell membrane. The catalysed reaction is L-seryl-[protein] + ATP = O-phospho-L-seryl-[protein] + ADP + H(+). The enzyme catalyses L-threonyl-[protein] + ATP = O-phospho-L-threonyl-[protein] + ADP + H(+). The sequence is that of Putative receptor-like protein kinase At3g46340 from Arabidopsis thaliana (Mouse-ear cress).